The sequence spans 293 residues: Probable 2-(5''-triphosphoribosyl)-3'-dephosphocoenzyme-A synthase (293 aa).

The protein belongs to the CitG/MdcB family.

The catalysed reaction is 3'-dephospho-CoA + ATP = 2'-(5''-triphospho-alpha-D-ribosyl)-3'-dephospho-CoA + adenine. Involved in the formation of 2-(5''-phosphoribosyl)-3'-dephosphocoenzyme-A, the prosthetic group of the acyl-carrier protein of the malonate decarboxylase. This is Probable 2-(5''-triphosphoribosyl)-3'-dephosphocoenzyme-A synthase from Pseudomonas aeruginosa (strain UCBPP-PA14).